The primary structure comprises 466 residues: tRNA(Ile)-lysidine synthase (466 aa).

Residue 26 to 31 coordinates ATP; it reads SGGSDS.

It belongs to the tRNA(Ile)-lysidine synthase family.

The protein localises to the cytoplasm. It catalyses the reaction cytidine(34) in tRNA(Ile2) + L-lysine + ATP = lysidine(34) in tRNA(Ile2) + AMP + diphosphate + H(+). In terms of biological role, ligates lysine onto the cytidine present at position 34 of the AUA codon-specific tRNA(Ile) that contains the anticodon CAU, in an ATP-dependent manner. Cytidine is converted to lysidine, thus changing the amino acid specificity of the tRNA from methionine to isoleucine. This is tRNA(Ile)-lysidine synthase from Oceanobacillus iheyensis (strain DSM 14371 / CIP 107618 / JCM 11309 / KCTC 3954 / HTE831).